Reading from the N-terminus, the 98-residue chain is NADH-ubiquinone oxidoreductase chain 4L (98 aa).

Helical transmembrane passes span 1–21, 29–49, and 61–81; these read MPVVYVNIFLAFIVSLMGLLI, SLLCLEGMMLSLFVMLTVTVL, and IILLVFAACEAALGLSLLVMV.

It belongs to the complex I subunit 4L family. Core subunit of respiratory chain NADH dehydrogenase (Complex I) which is composed of 45 different subunits.

It localises to the mitochondrion inner membrane. The enzyme catalyses a ubiquinone + NADH + 5 H(+)(in) = a ubiquinol + NAD(+) + 4 H(+)(out). Core subunit of the mitochondrial membrane respiratory chain NADH dehydrogenase (Complex I) which catalyzes electron transfer from NADH through the respiratory chain, using ubiquinone as an electron acceptor. Part of the enzyme membrane arm which is embedded in the lipid bilayer and involved in proton translocation. In Ursus americanus (American black bear), this protein is NADH-ubiquinone oxidoreductase chain 4L (MT-ND4L).